A 226-amino-acid polypeptide reads, in one-letter code: GTP-binding nuclear protein Ran (226 aa).

The region spanning 3–184 (DPISFKVILV…LSILRTLLND (182 aa)) is the Small GTPase Ran-type domain. A GTP-binding site is contributed by 14-21 (DGATGKTT). Residues 33-41 (KQYISTIGV) are switch-I. GTP is bound by residues Gly70, 135–138 (NKCD), and 163–165 (SAK). Residues 70–86 (GQEKFGGLRDGYYVDSD) form a switch-II region.

It belongs to the small GTPase superfamily. Ran family. In terms of assembly, found in a nuclear export complex with RanGTP, exportin and pre-miRNA.

It localises to the nucleus. In terms of biological role, GTP-binding protein involved in nucleocytoplasmic transport. Required for the import of protein into the nucleus and also for RNA export. Involved in chromatin condensation and control of cell cycle. The sequence is that of GTP-binding nuclear protein Ran from Giardia intestinalis (Giardia lamblia).